Here is a 172-residue protein sequence, read N- to C-terminus: Co-chaperone protein HscB homolog (172 aa).

The J domain maps to asparagine 2–leucine 69.

This sequence belongs to the HscB family. Interacts with HscA and stimulates its ATPase activity.

Its function is as follows. Co-chaperone involved in the maturation of iron-sulfur cluster-containing proteins. Seems to help targeting proteins to be folded toward HscA. The sequence is that of Co-chaperone protein HscB homolog from Acinetobacter baumannii (strain SDF).